A 752-amino-acid chain; its full sequence is Ribosomal protein S6 kinase 2 alpha (752 aa).

Positions 80-339 (FELLKVLGQG…AEEIKRHPFY (260 aa)) constitute a Protein kinase 1 domain. Residues 86-94 (LGQGSFGKV) and Lys112 each bind ATP. Catalysis depends on Asp205, which acts as the Proton acceptor. Ser239 carries the phosphoserine modification. The AGC-kinase C-terminal domain occupies 340-409 (STIDWNKLYR…VATGLMEDSK (70 aa)). Thr377 is modified (phosphothreonine). Ser381 carries the post-translational modification Phosphoserine. A Phosphoserine; by autocatalysis modification is found at Ser398. One can recognise a Protein kinase 2 domain in the interval 435 to 692 (YVVKEAIGVG…AKQVLQHPWI (258 aa)). Residues 441–449 (IGVGSYSVC) and Lys464 contribute to the ATP site. The active-site Proton acceptor is Asp552. Residue Thr590 is modified to Phosphothreonine. At Ser749 the chain carries Phosphoserine.

Belongs to the protein kinase superfamily. AGC Ser/Thr protein kinase family. S6 kinase subfamily. The cofactor is Mg(2+). Autophosphorylated on Ser-398, as part of the activation process. As to expression, small and large intestine, spleen, stomach, and bursa, and to a lesser extent lung and kidney.

The catalysed reaction is L-seryl-[protein] + ATP = O-phospho-L-seryl-[protein] + ADP + H(+). The enzyme catalyses L-threonyl-[protein] + ATP = O-phospho-L-threonyl-[protein] + ADP + H(+). Activated by multiple phosphorylations on threonine and serine residues. Serine/threonine kinase that may play a role in mediating the growth-factor and stress induced activation of transcription. The protein is Ribosomal protein S6 kinase 2 alpha (RPS6KA) of Gallus gallus (Chicken).